Consider the following 288-residue polypeptide: ATP synthase gamma chain (288 aa).

Belongs to the ATPase gamma chain family. F-type ATPases have 2 components, CF(1) - the catalytic core - and CF(0) - the membrane proton channel. CF(1) has five subunits: alpha(3), beta(3), gamma(1), delta(1), epsilon(1). CF(0) has three main subunits: a, b and c.

It is found in the cell membrane. Its function is as follows. Produces ATP from ADP in the presence of a proton gradient across the membrane. The gamma chain is believed to be important in regulating ATPase activity and the flow of protons through the CF(0) complex. The chain is ATP synthase gamma chain from Bacillus pumilus (strain SAFR-032).